The primary structure comprises 520 residues: GMP synthase [glutamine-hydrolyzing] (520 aa).

One can recognise a Glutamine amidotransferase type-1 domain in the interval 13 to 205; that stretch reads KIIVLDYGSQ…ALNICKAKGD (193 aa). The active-site Nucleophile is Cys-90. Catalysis depends on residues His-179 and Glu-181. In terms of domain architecture, GMPS ATP-PPase spans 206 to 395; the sequence is WSMDNFIDMQ…LGMPDHIVWR (190 aa). Residue 233–239 participates in ATP binding; the sequence is SGGVDSS.

Homodimer.

The catalysed reaction is XMP + L-glutamine + ATP + H2O = GMP + L-glutamate + AMP + diphosphate + 2 H(+). It participates in purine metabolism; GMP biosynthesis; GMP from XMP (L-Gln route): step 1/1. Catalyzes the synthesis of GMP from XMP. This is GMP synthase [glutamine-hydrolyzing] from Streptococcus pneumoniae (strain CGSP14).